We begin with the raw amino-acid sequence, 163 residues long: Nucleotide-binding protein EAT1b_2037 (163 aa).

This sequence belongs to the YajQ family.

In terms of biological role, nucleotide-binding protein. This is Nucleotide-binding protein EAT1b_2037 from Exiguobacterium sp. (strain ATCC BAA-1283 / AT1b).